The sequence spans 356 residues: Tyrosine recombinase XerS (356 aa).

The region spanning 16–121 (IMPWYVLEYY…ALSSLYKYLT (106 aa)) is the Core-binding (CB) domain. A Tyr recombinase domain is found at 169–354 (GFLTYIDQEY…VNDEQKNALD (186 aa)). Active-site residues include Arg210, Lys234, His306, Arg309, and His332. Tyr341 functions as the O-(3'-phospho-DNA)-tyrosine intermediate in the catalytic mechanism.

This sequence belongs to the 'phage' integrase family. XerS subfamily.

The protein localises to the cytoplasm. FtsK is required for recombination. Site-specific tyrosine recombinase, which acts by catalyzing the cutting and rejoining of the recombining DNA molecules. Essential to convert dimers of the bacterial chromosome into monomers to permit their segregation at cell division. This is Tyrosine recombinase XerS from Streptococcus pneumoniae (strain Hungary19A-6).